Reading from the N-terminus, the 269-residue chain is Shikimate dehydrogenase (NADP(+)) (269 aa).

Shikimate contacts are provided by residues 17-19 (SKS) and Thr64. Lys68 acts as the Proton acceptor in catalysis. Glu80 lines the NADP(+) pocket. Residues Asn89 and Asp105 each contribute to the shikimate site. Residues 130 to 134 (GAGGA), 154 to 159 (NRTHAK), and Met213 each bind NADP(+). Position 215 (Tyr215) interacts with shikimate. Gly237 provides a ligand contact to NADP(+).

The protein belongs to the shikimate dehydrogenase family. In terms of assembly, homodimer.

It catalyses the reaction shikimate + NADP(+) = 3-dehydroshikimate + NADPH + H(+). It participates in metabolic intermediate biosynthesis; chorismate biosynthesis; chorismate from D-erythrose 4-phosphate and phosphoenolpyruvate: step 4/7. In terms of biological role, involved in the biosynthesis of the chorismate, which leads to the biosynthesis of aromatic amino acids. Catalyzes the reversible NADPH linked reduction of 3-dehydroshikimate (DHSA) to yield shikimate (SA). The polypeptide is Shikimate dehydrogenase (NADP(+)) (Neisseria cinerea).